The following is a 266-amino-acid chain: Uxu operon regulator (266 aa).

Positions 23 to 91 (NRTYTRIGQL…KGSGVYVVRT (69 aa)) constitute an HTH gntR-type domain. A DNA-binding region (H-T-H motif) is located at residues 51 to 70 (EREISEKFGVSRTIVREAMV).

Its function is as follows. Repressor for the uxuRBA operon. The sequence is that of Uxu operon regulator (uxuR) from Haemophilus influenzae (strain ATCC 51907 / DSM 11121 / KW20 / Rd).